We begin with the raw amino-acid sequence, 395 residues long: Cystathionine beta-lyase MetC (395 aa).

Lys210 is subject to N6-(pyridoxal phosphate)lysine.

The protein belongs to the trans-sulfuration enzymes family. Homotetramer; dimer of dimers. It depends on pyridoxal 5'-phosphate as a cofactor.

It localises to the cytoplasm. It carries out the reaction L,L-cystathionine + H2O = L-homocysteine + pyruvate + NH4(+). It catalyses the reaction L-cysteine + H2O = hydrogen sulfide + pyruvate + NH4(+) + H(+). The catalysed reaction is an S-substituted L-cysteine + H2O = a thiol + pyruvate + NH4(+). It participates in amino-acid biosynthesis; L-methionine biosynthesis via de novo pathway; L-homocysteine from L-cystathionine: step 1/1. With respect to regulation, L-cysteine inhibits cystathionine beta-lyase activity competitively. Inhibited by aminoethoxyvinylglycine (AVG). Primarily catalyzes the cleavage of cystathionine to homocysteine, pyruvate and ammonia during methionine biosynthesis. Also exhibits cysteine desulfhydrase activity, producing sulfide from cysteine. In addition, under certain growth conditions, exhibits significant alanine racemase coactivity. The polypeptide is Cystathionine beta-lyase MetC (Escherichia coli (strain K12)).